Here is a 473-residue protein sequence, read N- to C-terminus: ATP synthase subunit beta 2 (473 aa).

158-165 serves as a coordination point for ATP; sequence GGAGVGKT.

It belongs to the ATPase alpha/beta chains family. In terms of assembly, F-type ATPases have 2 components, CF(1) - the catalytic core - and CF(0) - the membrane proton channel. CF(1) has five subunits: alpha(3), beta(3), gamma(1), delta(1), epsilon(1). CF(0) has three main subunits: a(1), b(2) and c(9-12). The alpha and beta chains form an alternating ring which encloses part of the gamma chain. CF(1) is attached to CF(0) by a central stalk formed by the gamma and epsilon chains, while a peripheral stalk is formed by the delta and b chains.

The protein localises to the cell membrane. The enzyme catalyses ATP + H2O + 4 H(+)(in) = ADP + phosphate + 5 H(+)(out). Produces ATP from ADP in the presence of a proton gradient across the membrane. The catalytic sites are hosted primarily by the beta subunits. The polypeptide is ATP synthase subunit beta 2 (Listeria monocytogenes serotype 4b (strain F2365)).